A 154-amino-acid chain; its full sequence is Protein disulfide-isomerase LQY1, chloroplastic (154 aa).

The N-terminal 43 residues, 1 to 43, are a transit peptide targeting the chloroplast; it reads MPVSAPSPPRLHSPFIHCPINFTPSSFSARNLRSPSTSYPRIK. Residues 51 to 71 form a helical membrane-spanning segment; it reads VVAISVGVASVALGIGIPVFY. The CR-type zinc-finger motif lies at 77 to 147; the sequence is NAAKRENTQP…SGVQPRYLDR (71 aa). Zn(2+)-binding residues include C87, C90, C98, C101, C121, C124, C132, and C135.

Belongs to the BSD2 chaperone family. In terms of assembly, interacts with the photosystem II core subunits. Interacts with HHL1. Requires Zn(2+) as cofactor.

The protein resides in the plastid. It localises to the chloroplast thylakoid membrane. It carries out the reaction Catalyzes the rearrangement of -S-S- bonds in proteins.. Protein disulfide-isomerase probably involved upon formation of a complex with HHL1 in maintaining photosystem II (PSII) activity under high light by regulating repair and reassembly of PSII complexes. The chain is Protein disulfide-isomerase LQY1, chloroplastic from Arabidopsis thaliana (Mouse-ear cress).